The sequence spans 30 residues: Snaclec carinactivase-1 regulatory subunit 14 kDa chain (30 aa).

Residues 1–30 (DCLPDWFHYEGHCYRVFDEPKKWADAEKFC) enclose the C-type lectin domain. Cysteines 2 and 13 form a disulfide.

This sequence belongs to the snaclec family. In terms of assembly, heterodimer of a metalloproteinase subunit and a regulatory subunit comprising two polypeptides disulfide-linked (14 kDa and 17 kDa chains). Expressed by the venom gland.

It is found in the secreted. Functionally, calcium-dependent prothrombin activator. This protein may activate prothrombin via recognition by the regulatory subunit of the calcium ion bound conformation of its gamma-carboxyglutamic acid (GLA) domain, and the subsequent conversion of prothrombin to active thrombin is catalyzed by the catalytic subunit. The polypeptide is Snaclec carinactivase-1 regulatory subunit 14 kDa chain (Echis carinatus (Saw-scaled viper)).